A 395-amino-acid polypeptide reads, in one-letter code: Probable FMNH2-dependent monooxygenase SfnC (395 aa).

In terms of biological role, involved in the dimethyl sulfide degradation pathway. In Pseudomonas putida (Arthrobacter siderocapsulatus), this protein is Probable FMNH2-dependent monooxygenase SfnC.